The primary structure comprises 156 residues: MPTPKKGARLGGSASHQKKILSNLAAQLFENGAIKTTDAKAKLLRPYAEKIITKAKNGTLADRRNVLKLIPNKDVVSHLFTELAPKFEGREGGYTRIIKLENRKGDNAPMSQISLVTEELASKEAERATRAAASKKAAEEKAAEAAEEKDEAAEEK.

The disordered stretch occupies residues arginine 127 to lysine 156. Residues lysine 136 to alanine 146 are compositionally biased toward basic and acidic residues. Over residues glutamate 147 to lysine 156 the composition is skewed to acidic residues.

It belongs to the bacterial ribosomal protein bL17 family. Part of the 50S ribosomal subunit. Contacts protein L32.

This Corynebacterium urealyticum (strain ATCC 43042 / DSM 7109) protein is Large ribosomal subunit protein bL17.